The sequence spans 1481 residues: ABC-type transporter braE (1481 aa).

Transmembrane regions (helical) follow at residues 27 to 47 (FTVK…FILA), 86 to 106 (LILI…SSAL), 130 to 150 (IFLS…ARTY), 159 to 179 (EIAF…MLLL), 269 to 289 (LYVP…SFFC), and 308 to 328 (PANI…VIAI). The 269-residue stretch at 281 to 549 (LAAIGSFFCQ…LLETLPQMAA (269 aa)) folds into the ABC transmembrane type-1 1 domain. N-linked (GlcNAc...) asparagine glycosylation occurs at Asn367. The next 3 membrane-spanning stretches (helical) occupy residues 389 to 409 (ELWG…NLLG), 410 to 430 (VAFI…SFFM), and 491 to 511 (LMLT…PITF). The 230-residue stretch at 594–823 (VAIKDGSFGW…QSYIHSLGVK (230 aa)) folds into the ABC transporter 1 domain. ATP is bound at residue 627 to 634 (GPIASGKS). Asn671 and Asn813 each carry an N-linked (GlcNAc...) asparagine glycan. 6 helical membrane passes run 887 to 907 (IAIF…TIWL), 928 to 948 (AIYA…GVLL), 1001 to 1021 (SALL…AVIA), 1026 to 1046 (YLAI…KFYL), 1111 to 1131 (LHFV…SLAV), and 1144 to 1164 (LVTL…YTAL). An ABC transmembrane type-1 2 domain is found at 887 to 1166 (IAIFTSGLLY…VVIYYTALET (280 aa)). 2 N-linked (GlcNAc...) asparagine glycosylation sites follow: Asn1207 and Asn1232. The region spanning 1224 to 1477 (LTTNELSSND…PGTRFGELWS (254 aa)) is the ABC transporter 2 domain. 1260 to 1267 (GRTGSGKS) contacts ATP. 2 N-linked (GlcNAc...) asparagine glycosylation sites follow: Asn1330 and Asn1364.

The protein belongs to the ABC transporter superfamily. ABCC family. Conjugate transporter (TC 3.A.1.208) subfamily.

It localises to the membrane. Functionally, ABC-type transporter; part of the gene cluster that mediates the biosynthesis of the brasilane terpene glycosides brasilane D and E. The chain is ABC-type transporter braE from Annulohypoxylon truncatum (Hypoxylon truncatum).